Consider the following 625-residue polypeptide: Autophagy-related protein 20 (625 aa).

Residues Met-1 to His-59 are disordered. 2 stretches are compositionally biased toward polar residues: residues Asp-15–Phe-26 and Ser-34–His-59. The 124-residue stretch at Asn-79 to Leu-202 folds into the PX domain. A 1,2-diacyl-sn-glycero-3-phospho-(1D-myo-inositol-3-phosphate) is bound by residues Arg-118, Ser-120, Lys-144, and Arg-167.

This sequence belongs to the sorting nexin family.

The protein resides in the endosome membrane. It localises to the preautophagosomal structure membrane. In terms of biological role, required for cytoplasm to vacuole transport (Cvt), pexophagy and mitophagy. Also involved in endoplasmic reticulum-specific autophagic process and is essential for the survival of cells subjected to severe ER stress. Functions in protein retrieval from the endocytic pathway. The chain is Autophagy-related protein 20 (ATG20) from Debaryomyces hansenii (strain ATCC 36239 / CBS 767 / BCRC 21394 / JCM 1990 / NBRC 0083 / IGC 2968) (Yeast).